The sequence spans 27 residues: Cationic protein C1 (27 aa).

Its subcellular location is the secreted. It is found in the nematocyst. The chain is Cationic protein C1 from Bunodosoma caissarum (Sea anemone).